Reading from the N-terminus, the 676-residue chain is A-type ATP synthase subunit I (676 aa).

The next 8 membrane-spanning stretches (helical) occupy residues valine 341 to glycine 361, alanine 390 to valine 410, isoleucine 449 to glycine 469, isoleucine 490 to phenylalanine 510, leucine 538 to methionine 558, methionine 564 to serine 584, alanine 590 to isoleucine 610, and isoleucine 617 to isoleucine 637.

This sequence belongs to the V-ATPase 116 kDa subunit family. Has multiple subunits with at least A(3), B(3), C, D, E, F, H, I and proteolipid K(x).

It is found in the cell membrane. Its function is as follows. Component of the A-type ATP synthase that produces ATP from ADP in the presence of a proton gradient across the membrane. The protein is A-type ATP synthase subunit I of Archaeoglobus fulgidus (strain ATCC 49558 / DSM 4304 / JCM 9628 / NBRC 100126 / VC-16).